The chain runs to 345 residues: Holliday junction branch migration complex subunit RuvB (345 aa).

Residues 4–182 (PDRIVSAVQR…FGIPIRLEFY (179 aa)) are large ATPase domain (RuvB-L). Residues Arg-22, Gly-63, Lys-66, Thr-67, Thr-68, 129–131 (EDY), Arg-172, Tyr-182, and Arg-219 contribute to the ATP site. Thr-67 contacts Mg(2+). Residues 183–253 (TVDELQAIVT…IADAALSRLE (71 aa)) are small ATPAse domain (RuvB-S). Positions 256 to 345 (ALGLDQLDRR…QSQINLFEEE (90 aa)) are head domain (RuvB-H). 3 residues coordinate DNA: Arg-292, Arg-311, and Arg-316.

It belongs to the RuvB family. As to quaternary structure, homohexamer. Forms an RuvA(8)-RuvB(12)-Holliday junction (HJ) complex. HJ DNA is sandwiched between 2 RuvA tetramers; dsDNA enters through RuvA and exits via RuvB. An RuvB hexamer assembles on each DNA strand where it exits the tetramer. Each RuvB hexamer is contacted by two RuvA subunits (via domain III) on 2 adjacent RuvB subunits; this complex drives branch migration. In the full resolvosome a probable DNA-RuvA(4)-RuvB(12)-RuvC(2) complex forms which resolves the HJ.

The protein localises to the cytoplasm. It carries out the reaction ATP + H2O = ADP + phosphate + H(+). In terms of biological role, the RuvA-RuvB-RuvC complex processes Holliday junction (HJ) DNA during genetic recombination and DNA repair, while the RuvA-RuvB complex plays an important role in the rescue of blocked DNA replication forks via replication fork reversal (RFR). RuvA specifically binds to HJ cruciform DNA, conferring on it an open structure. The RuvB hexamer acts as an ATP-dependent pump, pulling dsDNA into and through the RuvAB complex. RuvB forms 2 homohexamers on either side of HJ DNA bound by 1 or 2 RuvA tetramers; 4 subunits per hexamer contact DNA at a time. Coordinated motions by a converter formed by DNA-disengaged RuvB subunits stimulates ATP hydrolysis and nucleotide exchange. Immobilization of the converter enables RuvB to convert the ATP-contained energy into a lever motion, pulling 2 nucleotides of DNA out of the RuvA tetramer per ATP hydrolyzed, thus driving DNA branch migration. The RuvB motors rotate together with the DNA substrate, which together with the progressing nucleotide cycle form the mechanistic basis for DNA recombination by continuous HJ branch migration. Branch migration allows RuvC to scan DNA until it finds its consensus sequence, where it cleaves and resolves cruciform DNA. This Chelativorans sp. (strain BNC1) protein is Holliday junction branch migration complex subunit RuvB.